A 519-amino-acid chain; its full sequence is NADH-quinone oxidoreductase subunit N (519 aa).

Transmembrane regions (helical) follow at residues L22–V42, V53–P73, P87–A107, T141–N161, L163–M183, Y198–G218, I242–F262, V287–D307, P310–Q330, L336–T356, V363–L383, L406–G426, A442–L461, and G483–V503.

Belongs to the complex I subunit 2 family. NDH-1 is composed of 14 different subunits. Subunits NuoA, H, J, K, L, M, N constitute the membrane sector of the complex.

The protein localises to the cell membrane. The catalysed reaction is a quinone + NADH + 5 H(+)(in) = a quinol + NAD(+) + 4 H(+)(out). Functionally, NDH-1 shuttles electrons from NADH, via FMN and iron-sulfur (Fe-S) centers, to quinones in the respiratory chain. The immediate electron acceptor for the enzyme in this species is believed to be a menaquinone. Couples the redox reaction to proton translocation (for every two electrons transferred, four hydrogen ions are translocated across the cytoplasmic membrane), and thus conserves the redox energy in a proton gradient. This Acidothermus cellulolyticus (strain ATCC 43068 / DSM 8971 / 11B) protein is NADH-quinone oxidoreductase subunit N.